Consider the following 257-residue polypeptide: Thioredoxin-dependent peroxide reductase, mitochondrial (257 aa).

Residues 1 to 62 (MAATAGRLFR…FAFSTSSSYH (62 aa)) constitute a mitochondrion transit peptide. The Thioredoxin domain occupies 64–222 (PAVTQHAPYF…TLRLVKAFQF (159 aa)). Lysine 84 is modified (N6-succinyllysine). The residue at position 92 (lysine 92) is an N6-acetyllysine; alternate. N6-succinyllysine; alternate is present on lysine 92. The active-site Cysteine sulfenic acid (-SOH) intermediate is the cysteine 109. The residue at position 147 (threonine 147) is a Phosphothreonine.

Belongs to the peroxiredoxin family. AhpC/Prx1 subfamily. In terms of assembly, homodimer; disulfide-linked, upon oxidation. 6 homodimers assemble to form a ring-like dodecamer. Interacts with NEK6. Interacts with LRRK2. Interacts with MAP3K13. Interacts with RPS6KC1 (via PX domain). Post-translationally, phosphorylated by LRRK2; phosphorylation reduces perodixase activity. In terms of processing, the enzyme can be inactivated by further oxidation of the cysteine sulfenic acid (C(P)-SOH) to sulphinic acid (C(P)-SO2H) and sulphonic acid (C(P)-SO3H) instead of its condensation to a disulfide bond. S-palmitoylated. In terms of tissue distribution, predominantly expressed in adrenal cortex. Also detected in liver, renal cortex and medulla, and adrenal medulla (at protein level).

Its subcellular location is the mitochondrion matrix. The protein localises to the cytoplasm. The protein resides in the early endosome. It catalyses the reaction a hydroperoxide + [thioredoxin]-dithiol = an alcohol + [thioredoxin]-disulfide + H2O. Thiol-specific peroxidase that catalyzes the reduction of hydrogen peroxide and organic hydroperoxides to water and alcohols, respectively. Plays a role in cell protection against oxidative stress by detoxifying peroxides. Acts synergistically with MAP3K13 to regulate the activation of NF-kappa-B in the cytosol. Required for the maintenance of physical strength. This chain is Thioredoxin-dependent peroxide reductase, mitochondrial (PRDX3), found in Bos taurus (Bovine).